Consider the following 505-residue polypeptide: ATP synthase subunit alpha (505 aa).

Gly-170–Thr-177 serves as a coordination point for ATP.

This sequence belongs to the ATPase alpha/beta chains family. In terms of assembly, F-type ATPases have 2 components, CF(1) - the catalytic core - and CF(0) - the membrane proton channel. CF(1) has five subunits: alpha(3), beta(3), gamma(1), delta(1), epsilon(1). CF(0) has four main subunits: a(1), b(1), b'(1) and c(9-12).

Its subcellular location is the cellular thylakoid membrane. The catalysed reaction is ATP + H2O + 4 H(+)(in) = ADP + phosphate + 5 H(+)(out). Produces ATP from ADP in the presence of a proton gradient across the membrane. The alpha chain is a regulatory subunit. This Prochlorococcus marinus (strain MIT 9313) protein is ATP synthase subunit alpha.